Reading from the N-terminus, the 299-residue chain is GTPase Era (299 aa).

Residues 4–171 (KSGFVAILGR…VDILSENLGE (168 aa)) form the Era-type G domain. A G1 region spans residues 12–19 (GRPNVGKS). Residue 12–19 (GRPNVGKS) participates in GTP binding. The segment at 38–42 (QTTRN) is G2. Residues 59 to 62 (DTPG) form a G3 region. GTP contacts are provided by residues 59–63 (DTPGI) and 121–124 (NKID). The G4 stretch occupies residues 121–124 (NKID). The segment at 150–152 (ISA) is G5. The KH type-2 domain occupies 202 to 280 (TREEIPHSVA…FLETWVKVKK (79 aa)).

The protein belongs to the TRAFAC class TrmE-Era-EngA-EngB-Septin-like GTPase superfamily. Era GTPase family. Monomer.

It is found in the cytoplasm. It localises to the cell membrane. Its function is as follows. An essential GTPase that binds both GDP and GTP, with rapid nucleotide exchange. Plays a role in 16S rRNA processing and 30S ribosomal subunit biogenesis and possibly also in cell cycle regulation and energy metabolism. This chain is GTPase Era, found in Streptococcus pneumoniae (strain JJA).